We begin with the raw amino-acid sequence, 281 residues long: Energy-coupling factor transporter ATP-binding protein EcfA1 (281 aa).

An ABC transporter domain is found at 6–245; it reads IKSEDLVFKY…VEKIKSIGLD (240 aa). 44–51 is an ATP binding site; sequence GHNGSGKS.

It belongs to the ABC transporter superfamily. Energy-coupling factor EcfA family. Forms a stable energy-coupling factor (ECF) transporter complex composed of 2 membrane-embedded substrate-binding proteins (S component), 2 ATP-binding proteins (A component) and 2 transmembrane proteins (T component).

It is found in the cell membrane. Its function is as follows. ATP-binding (A) component of a common energy-coupling factor (ECF) ABC-transporter complex. Unlike classic ABC transporters this ECF transporter provides the energy necessary to transport a number of different substrates. The protein is Energy-coupling factor transporter ATP-binding protein EcfA1 of Clostridium perfringens (strain ATCC 13124 / DSM 756 / JCM 1290 / NCIMB 6125 / NCTC 8237 / Type A).